The sequence spans 266 residues: Translation initiation factor 2 subunit alpha (266 aa).

One can recognise an S1 motif domain in the interval 12–83 (GDIVIGTVKD…RKGHIDLSLK (72 aa)).

The protein belongs to the eIF-2-alpha family. As to quaternary structure, heterotrimer composed of an alpha, a beta and a gamma chain.

In terms of biological role, eIF-2 functions in the early steps of protein synthesis by forming a ternary complex with GTP and initiator tRNA. The chain is Translation initiation factor 2 subunit alpha (eif2a) from Methanocaldococcus jannaschii (strain ATCC 43067 / DSM 2661 / JAL-1 / JCM 10045 / NBRC 100440) (Methanococcus jannaschii).